The primary structure comprises 238 residues: Aspartate/glutamate leucyltransferase (238 aa).

Belongs to the R-transferase family. Bpt subfamily.

Its subcellular location is the cytoplasm. It catalyses the reaction N-terminal L-glutamyl-[protein] + L-leucyl-tRNA(Leu) = N-terminal L-leucyl-L-glutamyl-[protein] + tRNA(Leu) + H(+). The enzyme catalyses N-terminal L-aspartyl-[protein] + L-leucyl-tRNA(Leu) = N-terminal L-leucyl-L-aspartyl-[protein] + tRNA(Leu) + H(+). Its function is as follows. Functions in the N-end rule pathway of protein degradation where it conjugates Leu from its aminoacyl-tRNA to the N-termini of proteins containing an N-terminal aspartate or glutamate. The chain is Aspartate/glutamate leucyltransferase from Shewanella sp. (strain MR-7).